We begin with the raw amino-acid sequence, 56 residues long: Preprotein translocase subunit SecG (56 aa).

Over 1 to 29 (MAKEKATLPPTGAGLMRFFDEDTKAVKIS) the chain is Cytoplasmic. Residues 30 to 51 (PRGVIALTLILVALEILLHAFG) form a helical membrane-spanning segment. The Extracellular segment spans residues 52-56 (PQIFG).

This sequence belongs to the SEC61-beta family. As to quaternary structure, component of the protein translocase complex. Heterotrimer consisting of alpha (SecY), beta (SecG) and gamma (SecE) subunits. Can form oligomers of the heterotrimer.

It localises to the cell membrane. In terms of biological role, involved in protein export. The function of the beta subunit is unknown, but it may be involved in stabilization of the trimeric complex. The polypeptide is Preprotein translocase subunit SecG (Thermococcus onnurineus (strain NA1)).